We begin with the raw amino-acid sequence, 296 residues long: Acetylglutamate kinase (296 aa).

Substrate is bound by residues 68–69, R90, and N195; that span reads GG.

The protein belongs to the acetylglutamate kinase family. ArgB subfamily.

It localises to the cytoplasm. It catalyses the reaction N-acetyl-L-glutamate + ATP = N-acetyl-L-glutamyl 5-phosphate + ADP. The protein operates within amino-acid biosynthesis; L-arginine biosynthesis; N(2)-acetyl-L-ornithine from L-glutamate: step 2/4. Its function is as follows. Catalyzes the ATP-dependent phosphorylation of N-acetyl-L-glutamate. This chain is Acetylglutamate kinase, found in Desulfotalea psychrophila (strain LSv54 / DSM 12343).